The primary structure comprises 475 residues: Cytochrome P450 monooxygenase sthD (475 aa).

The N-terminal stretch at 1–17 (MAAYFLLGLYGSTLVYR) is a signal peptide. The chain crosses the membrane as a helical span at residues 276–296 (FIIIAGSDTVAATLTFAFFYL). Asn336 carries N-linked (GlcNAc...) asparagine glycosylation. Cys418 is a binding site for heme.

It belongs to the cytochrome P450 family. Requires heme as cofactor.

The protein resides in the membrane. It carries out the reaction betaenone A + NADPH + O2 + H(+) = stemphyloxin II + NADP(+) + H2O. The catalysed reaction is betaenone C + NADPH + O2 + H(+) = stemphyloxin I + NADP(+) + H2O. It functions in the pathway mycotoxin biosynthesis. In terms of biological role, cytochrome P450 monooxygenase; part of the gene cluster that mediates the biosynthesis of the phytotoxin stemphyloxin II. The first step of the pathway is the synthesis of dehydroprobetaenone I by the polyketide synthase sthA and the enoyl reductase sthE via condensation of one acetyl-CoA starter unit with 7 malonyl-CoA units and 5 methylations. The C-terminal reductase (R) domain of sthA catalyzes the reductive release of the polyketide chain. Because sthA lacks a designated enoylreductase (ER) domain, the required activity is provided the enoyl reductase sthE. The short-chain dehydrogenase/reductase sthC then catalyzes reduction of dehydroprobetaenone I to probetaenone I. The cytochrome P450 monooxygenase sthF catalyzes successive epoxidation, oxidation (resulting from epoxide opening) and hydroxylation to install a tertiary alcohol in the decaline ring to yield betaenone C from dehydroprobetaenone I and betaenone B from probetaenone I. The FAD-linked oxidoreductase sthB is responsible for the conversion of betaenone C to betaenone A via an intramolecular aldol reaction between C-1 and C-17 to form the bridged tricyclic system in betaenone A. Finally, the cytochrome P450 monooxygenase sthD catalyzes the hydroxylation of C-15 to afford the final metabolite stemphyloxin II. This Phaeosphaeria nodorum (strain SN15 / ATCC MYA-4574 / FGSC 10173) (Glume blotch fungus) protein is Cytochrome P450 monooxygenase sthD.